The primary structure comprises 821 residues: DNA ligase (821 aa).

Residues 33–37 (DVDYD), 82–83 (SL), and E113 contribute to the NAD(+) site. K115 functions as the N6-AMP-lysine intermediate in the catalytic mechanism. NAD(+) contacts are provided by R136, E173, K290, and K314. The Zn(2+) site is built by C408, C411, C426, and C432. The region spanning 741–821 (IVAGPLDGQT…RLLAYLAEHE (81 aa)) is the BRCT domain.

Belongs to the NAD-dependent DNA ligase family. LigA subfamily. Mg(2+) serves as cofactor. The cofactor is Mn(2+).

It catalyses the reaction NAD(+) + (deoxyribonucleotide)n-3'-hydroxyl + 5'-phospho-(deoxyribonucleotide)m = (deoxyribonucleotide)n+m + AMP + beta-nicotinamide D-nucleotide.. Functionally, DNA ligase that catalyzes the formation of phosphodiester linkages between 5'-phosphoryl and 3'-hydroxyl groups in double-stranded DNA using NAD as a coenzyme and as the energy source for the reaction. It is essential for DNA replication and repair of damaged DNA. The protein is DNA ligase of Stenotrophomonas maltophilia (strain R551-3).